Here is a 525-residue protein sequence, read N- to C-terminus: Peptide chain release factor 3 (525 aa).

Positions 9-276 constitute a tr-type G domain; the sequence is AKRRTFAIIS…GFTRYAPAPQ (268 aa). GTP contacts are provided by residues 18 to 25, 86 to 90, and 140 to 143; these read SHPDAGKT, DTPGH, and NKFD.

The protein belongs to the TRAFAC class translation factor GTPase superfamily. Classic translation factor GTPase family. PrfC subfamily.

The protein localises to the cytoplasm. Functionally, increases the formation of ribosomal termination complexes and stimulates activities of RF-1 and RF-2. It binds guanine nucleotides and has strong preference for UGA stop codons. It may interact directly with the ribosome. The stimulation of RF-1 and RF-2 is significantly reduced by GTP and GDP, but not by GMP. The polypeptide is Peptide chain release factor 3 (Francisella tularensis subsp. novicida (strain U112)).